We begin with the raw amino-acid sequence, 282 residues long: MGLEKTVKEKLSFEGVGIHTGEYSKLIIHPEKEGTGIRFFKNGVYIPARHEFVVHTNHSTDLGFKGQRIKTVEHILSVLHLLEITNVTIEVIGNEIPILDGSGWEFYEAIRKNILNQNREIDYFVVEEPIIVEDEGRLIKAEPSDTLEVTYEGEFKNFLGRQKFTFVEGNEEEIVLARTFCFDWEIEHIKKVGLGKGGSLKNTLVLGKDKVYNPEGLRYENEPVRHKVFDLIGDLYLLGSPVKGKFYSFRGGHSLNVKLVKELAKKQKLTRDLPHLPSVQAL.

Residues His74, His226, and Asp230 each contribute to the Zn(2+) site. The Proton donor role is filled by His253.

It belongs to the LpxC family. Zn(2+) serves as cofactor.

The enzyme catalyses a UDP-3-O-[(3R)-3-hydroxyacyl]-N-acetyl-alpha-D-glucosamine + H2O = a UDP-3-O-[(3R)-3-hydroxyacyl]-alpha-D-glucosamine + acetate. It participates in glycolipid biosynthesis; lipid IV(A) biosynthesis; lipid IV(A) from (3R)-3-hydroxytetradecanoyl-[acyl-carrier-protein] and UDP-N-acetyl-alpha-D-glucosamine: step 2/6. Its function is as follows. Catalyzes the hydrolysis of UDP-3-O-myristoyl-N-acetylglucosamine to form UDP-3-O-myristoylglucosamine and acetate, the committed step in lipid A biosynthesis. This chain is UDP-3-O-acyl-N-acetylglucosamine deacetylase, found in Aquifex aeolicus (strain VF5).